A 481-amino-acid chain; its full sequence is Cobyric acid synthase (481 aa).

Residues 249 to 436 (GLHIVCLRLS…LHGMFRDDAF (188 aa)) enclose the GATase cobBQ-type domain. The active-site Nucleophile is Cys331. Residue His428 is part of the active site.

It belongs to the CobB/CobQ family. CobQ subfamily.

The protein operates within cofactor biosynthesis; adenosylcobalamin biosynthesis. Functionally, catalyzes amidations at positions B, D, E, and G on adenosylcobyrinic A,C-diamide. NH(2) groups are provided by glutamine, and one molecule of ATP is hydrogenolyzed for each amidation. This is Cobyric acid synthase from Jannaschia sp. (strain CCS1).